Here is an 813-residue protein sequence, read N- to C-terminus: Calpain-7 (813 aa).

An N-acetylmethionine modification is found at Met1. Phosphothreonine is present on Thr95. A Calpain catalytic domain is found at 232–540 (RERFAYPMPF…YDVIYLSWNP (309 aa)). Catalysis depends on residues Cys290, His458, and Asn478. Positions 541–701 (GLLKESTCIH…INGKWSGQSA (161 aa)) are domain III. Positions 702–813 (GGCGNFQETH…VIPIKTTQLQ (112 aa)) are domain N.

This sequence belongs to the peptidase C2 family.

The protein localises to the nucleus. Functionally, calcium-regulated non-lysosomal thiol-protease. This chain is Calpain-7 (CAPN7), found in Sus scrofa (Pig).